Consider the following 217-residue polypeptide: Large ribosomal subunit protein uL3 (217 aa).

Positions 127–162 (GFSRGPMSHGSKNHRAPGSTGAGTTPGRIYPGKRMA) are disordered. The segment covering 142–153 (APGSTGAGTTPG) has biased composition (low complexity).

This sequence belongs to the universal ribosomal protein uL3 family. In terms of assembly, part of the 50S ribosomal subunit. Forms a cluster with proteins L14 and L19.

One of the primary rRNA binding proteins, it binds directly near the 3'-end of the 23S rRNA, where it nucleates assembly of the 50S subunit. The sequence is that of Large ribosomal subunit protein uL3 from Prochlorococcus marinus (strain MIT 9312).